The primary structure comprises 859 residues: Cation/H(+) antiporter 24 (859 aa).

Transmembrane regions (helical) follow at residues 64–84 (AFSTFLIEAIIIIFFIKVVSI), 92–112 (PRIVSEIIGGMMIGPSMFGGI), 122–142 (PIANYICANIGLMGFFYFLFL), 161–181 (YIAAIGVIVPIICVGSVGMAM), 194–214 (SIGGVVFALSFTSFPVIYTVL), 227–247 (FAMSVALLGDMAGVYVIVIFE), 258–278 (YSVFWFLVSVVIFAAFMLLVV), 291–311 (EGTLVNQNYIVMILMGVLASC), 312–332 (FLTDMFGLSIAVGPIWLGLLV), 348–368 (TFIYEFLMPFTYALVGQGTNI), 384–404 (FYMTVVGFITKFLSTAFAALF), and 438–458 (IVGFPGYTVMVLHTVVVTAVT). Residues 538-566 (IDHEQRKEEEEEEYEEEEEEPERKQSGRI) form a disordered region. Acidic residues predominate over residues 546–557 (EEEEEYEEEEEE). A Phosphoserine modification is found at S857.

Belongs to the monovalent cation:proton antiporter 2 (CPA2) transporter (TC 2.A.37) family. CHX (TC 2.A.37.4) subfamily. Specifically expressed in pollen.

It localises to the membrane. Functionally, may operate as a cation/H(+) antiporter. This is Cation/H(+) antiporter 24 (CHX24) from Arabidopsis thaliana (Mouse-ear cress).